The sequence spans 494 residues: Smoothelin-like protein 1 (494 aa).

4 stretches are compositionally biased toward basic and acidic residues: residues 1–10 (MEQKEGKLSE), 74–104 (DEVK…KEET), 112–166 (TGRK…KATV), and 179–232 (TGQR…KEEA). The disordered stretch occupies residues 1–348 (MEQKEGKLSE…ARPRGPRAQN (348 aa)). Residues 123–145 (KEAEEKESTLASEKQKAEEKEAK) are a coiled coil. Residues 233 to 255 (DAKEEAEDAEEAEPGSPSEEQEQ) show a composition bias toward acidic residues. Composition is skewed to low complexity over residues 269-279 (PSSPEEWPESP) and 302-314 (SPSA…SDVP). Over residues 324–335 (GEKKEKAPERRV) the composition is skewed to basic and acidic residues. S336 is modified (phosphoserine). The 107-residue stretch at 378–484 (GGVKNMLLEW…YIQELYRSLV (107 aa)) folds into the Calponin-homology (CH) domain. Residues 476 to 494 (IQELYRSLVQKGLVKTKKK) are calmodulin-binding.

The protein belongs to the smoothelin family. Interacts with PPP1R12A. In terms of processing, maximal phosphorylation of Ser-336 correlates with maximal relaxation of aorta in response to acetylcholine. As to expression, expressed in striated muscles, specifically in type 2a fibers (at protein level).

The protein resides in the cytoplasm. It is found in the myofibril. It localises to the sarcomere. Its subcellular location is the i band. The protein localises to the m line. The protein resides in the nucleus. Its function is as follows. Plays a role in the regulation of contractile properties of both striated and smooth muscles. When unphosphorylated, may inhibit myosin dephosphorylation. Phosphorylation at Ser-299 reduces this inhibitory activity. The chain is Smoothelin-like protein 1 (SMTNL1) from Homo sapiens (Human).